A 61-amino-acid polypeptide reads, in one-letter code: Large ribosomal subunit protein uL30 (61 aa).

This sequence belongs to the universal ribosomal protein uL30 family. Part of the 50S ribosomal subunit.

The sequence is that of Large ribosomal subunit protein uL30 from Rhizorhabdus wittichii (strain DSM 6014 / CCUG 31198 / JCM 15750 / NBRC 105917 / EY 4224 / RW1) (Sphingomonas wittichii).